The sequence spans 468 residues: Tapasin-related protein (468 aa).

The first 18 residues, methionine 1–alanine 18, serve as a signal peptide directing secretion. The Lumenal portion of the chain corresponds to alanine 19–arginine 405. An Ig-like V-type domain is found at proline 181–glutamine 297. Cystine bridges form between cysteine 212–cysteine 283 and cysteine 321–cysteine 382. A glycan (N-linked (GlcNAc...) asparagine) is linked at asparagine 265. One can recognise an Ig-like C1-type domain in the interval proline 304–glycine 394. Residues threonine 406 to leucine 426 form a helical membrane-spanning segment. Residues glutamine 427–serine 468 are Cytoplasmic-facing.

In terms of assembly, interacts with peptide-free HLA-A*02-B2M complexes or those loaded with low affinity peptides, likely facilitating peptide exchange onto higher affinity peptides. Interacts with MR1 in a ligand-independent way; this interaction may stabilize MR1 pool and facilitate ligand loading and dissociation.

It localises to the cell membrane. The protein resides in the endoplasmic reticulum membrane. It is found in the microsome membrane. Its subcellular location is the golgi apparatus membrane. Component of the antigen processing and presentation pathway, which binds to MHC class I coupled with beta2-microglobulin/B2M. Association between TAPBPR and MHC class I occurs in the absence of a functional peptide-loading complex (PLC). Expression seems to slow down and down-regulate MHC class I surface expression. The chain is Tapasin-related protein (TAPBPL) from Pongo abelii (Sumatran orangutan).